The chain runs to 1025 residues: DNA ligase 4 (1025 aa).

Positions 1 to 36 are disordered; the sequence is MMQPTPAPSSAPGSPQRTQAEPEMETPSYPQPPQNV. Glu289, Lys291, Leu292, Arg296, Glu349, Phe387, Glu447, Lys452, Lys469, and Lys471 together coordinate ATP. Residue Lys291 is the N6-AMP-lysine intermediate of the active site. Glu349 serves as a coordination point for Mg(2+). Mg(2+) is bound at residue Glu447. Residues 667 to 763 enclose the BRCT 1 domain; it reads VKTDIFNGMK…EPAPFKKKYF (97 aa). The disordered stretch occupies residues 773-904; it reads ADEYNEDDGE…TTPDVDGDVK (132 aa). 2 stretches are compositionally biased toward acidic residues: residues 775–785 and 806–816; these read EYNEDDGEEEG and SETEDEDEEQA. Basic and acidic residues predominate over residues 817–838; the sequence is PEIKEEQDGELHEWLKVDDRKS. Residues 845–870 are compositionally biased toward acidic residues; sequence DEEDSVTEDDSDNADVADEEEPDLDD. Over residues 891–904 the composition is skewed to basic and acidic residues; sequence RHRETTPDVDGDVK. The BRCT 2 domain maps to 915–1025; that stretch reads DPDVIFKHLC…TLLDEEGESF (111 aa).

Belongs to the ATP-dependent DNA ligase family. The cofactor is Mg(2+).

The protein resides in the nucleus. It carries out the reaction ATP + (deoxyribonucleotide)n-3'-hydroxyl + 5'-phospho-(deoxyribonucleotide)m = (deoxyribonucleotide)n+m + AMP + diphosphate.. In terms of biological role, DNA ligase involved in DNA non-homologous end joining (NHEJ); required for double-strand break (DSB) repair. In Coprinopsis cinerea (strain Okayama-7 / 130 / ATCC MYA-4618 / FGSC 9003) (Inky cap fungus), this protein is DNA ligase 4 (LIG4).